A 366-amino-acid polypeptide reads, in one-letter code: Type 2 DNA topoisomerase 6 subunit A (366 aa).

The Topo IIA-type catalytic domain occupies 7–146 (SDETEARDQL…FHMRPEESGA (140 aa)). Residue Tyr101 is the O-(5'-phospho-DNA)-tyrosine intermediate of the active site. The Mg(2+) site is built by Glu199 and Asp251.

This sequence belongs to the TOP6A family. As to quaternary structure, homodimer. Heterotetramer of two Top6A and two Top6B chains. Requires Mg(2+) as cofactor.

It carries out the reaction ATP-dependent breakage, passage and rejoining of double-stranded DNA.. Relaxes both positive and negative superturns and exhibits a strong decatenase activity. This Halobacterium salinarum (strain ATCC 700922 / JCM 11081 / NRC-1) (Halobacterium halobium) protein is Type 2 DNA topoisomerase 6 subunit A.